The chain runs to 304 residues: MTASLHIILDTDPGIDDAAAIAAALFAPQLDLQLITTVAGNVSVEKTTRNALQLLHFWNSDIPLAQGAATPLLRPLRDAAYVHGESGMEGYDFVDHQRQPLAKPAFISIRDVLMNAPEPMTLVAIGPLTNIALLLMHYPECACNIRRLVLMGGSAGRGNFTPNAEFNIAVDPEAAAHVFRSGIEIVMCGLDVTNQAMLSPDFLNKLPALNRTGKMLHSLFNHYRSGSMRTGVRMHDLCAIAWLVRPELFTLQSCFVAVETQGEYTAGTTVVDIEGRLGQPANAQMALDVDGFRQWVAEVFAYAP.

Histidine 235 is an active-site residue.

This sequence belongs to the IUNH family. RihC subfamily.

Functionally, hydrolyzes both purine and pyrimidine ribonucleosides with a broad-substrate specificity. This chain is Non-specific ribonucleoside hydrolase RihC, found in Salmonella paratyphi A (strain ATCC 9150 / SARB42).